Consider the following 222-residue polypeptide: Probable transaldolase (222 aa).

The Schiff-base intermediate with substrate role is filled by lysine 91.

Belongs to the transaldolase family. Type 3B subfamily.

Its subcellular location is the cytoplasm. The catalysed reaction is D-sedoheptulose 7-phosphate + D-glyceraldehyde 3-phosphate = D-erythrose 4-phosphate + beta-D-fructose 6-phosphate. It participates in carbohydrate degradation; pentose phosphate pathway; D-glyceraldehyde 3-phosphate and beta-D-fructose 6-phosphate from D-ribose 5-phosphate and D-xylulose 5-phosphate (non-oxidative stage): step 2/3. Functionally, transaldolase is important for the balance of metabolites in the pentose-phosphate pathway. The sequence is that of Probable transaldolase from Pelodictyon phaeoclathratiforme (strain DSM 5477 / BU-1).